Here is a 402-residue protein sequence, read N- to C-terminus: UDP-N-acetylmuramoylalanine--D-glutamate ligase (402 aa).

97–103 is an ATP binding site; sequence GTNGKTT.

This sequence belongs to the MurCDEF family.

The protein resides in the cytoplasm. It catalyses the reaction UDP-N-acetyl-alpha-D-muramoyl-L-alanine + D-glutamate + ATP = UDP-N-acetyl-alpha-D-muramoyl-L-alanyl-D-glutamate + ADP + phosphate + H(+). It functions in the pathway cell wall biogenesis; peptidoglycan biosynthesis. Cell wall formation. Catalyzes the addition of glutamate to the nucleotide precursor UDP-N-acetylmuramoyl-L-alanine (UMA). This is UDP-N-acetylmuramoylalanine--D-glutamate ligase from Campylobacter jejuni subsp. jejuni serotype O:23/36 (strain 81-176).